Here is a 1391-residue protein sequence, read N- to C-terminus: CAP-Gly domain-containing linker protein 1 (1391 aa).

Residues 1–53 form a disordered region; that stretch reads MSMLKPSGLKAPTKILKPGSTALKTPAAAAAPVEKTIPSEKASGPPSSETQEE. The residue at position 48 (serine 48) is a Phosphoserine. Threonine 50 carries the phosphothreonine modification. The CAP-Gly 1 domain occupies 78-120; it reads GETQFAPGQWAGIVLDEPIGKNDGSVAGVRYFQCEPLKGIFTR. Residues 97 to 101 form an important for tubulin binding region; sequence GKNDG. The interval 129–182 is disordered; sequence QAEDEANGLQAAPGRTASPLSTAAATMVSSSPATPSNIPHKPSQSTAKEPSATP. At serine 146 the chain carries Phosphoserine. Polar residues predominate over residues 146 to 182; the sequence is SPLSTAAATMVSSSPATPSNIPHKPSQSTAKEPSATP. Residue threonine 181 is modified to Phosphothreonine. A phosphoserine mark is found at serine 194, serine 196, serine 199, and serine 203. The region spanning 231-273 is the CAP-Gly 2 domain; the sequence is GETDFAKGEWCGVELDEPLGKNDGAVAGTRYFQCQPKYGLFAP. The segment covering 302–331 has biased composition (low complexity); it reads TPASLKRSPSASSLSSMSSVASSVSSKPSR. Positions 302 to 336 are disordered; sequence TPASLKRSPSASSLSSMSSVASSVSSKPSRTGLLT. Serine 309 carries the post-translational modification Phosphoserine. At serine 311 the chain carries Phosphoserine; by PKA. Phosphoserine occurs at positions 314, 347, and 1189. Residues 349-1306 are a coiled coil; that stretch reads TTALQEALKE…VEMMSEAALN (958 aa). Residues 1251-1272 are disordered; the sequence is KRQLSSSSGNTDAQAEEDERAQ. Serine 1317 is modified (phosphoserine). The segment at 1370 to 1387 adopts a CCHC-type zinc-finger fold; it reads PYCEICEMFGHWATNCND.

As to quaternary structure, interacts with MTOR; phosphorylates and regulates CLIP1. Interacts (via CAP-Gly domains) with tubulin. Interacts with SLAIN2. Interacts with TUBA1B, MAPRE1 and MAPRE3. Interacts (via zinc finger) with DCTN1. Binds preferentially to tyrosinated microtubules, and only marginally to detyrosinated microtubules. Post-translationally, phosphorylated. Phosphorylation induces conformational changes by increasing the affinity of the N-terminus for C-terminus, resulting in inhibition of its function thus decreasing its binding to microtubules and DCTN1. Exhibits a folded, autoinhibited conformation when phosphorylated and an open conformation when dephosphorylated with increased binding affinity to microtubules and DCTN1. Phosphorylation regulates its recruitment to tyrosinated microtubules and the recruitment of vesicular cargo to microtubules in neurons. Phosphorylation by MTOR may positively regulate CLIP1 association with microtubules. As to expression, expressed in the testes (at protein level).

It is found in the cytoplasm. The protein resides in the cytoskeleton. Its subcellular location is the cytoplasmic vesicle membrane. The protein localises to the cell projection. It localises to the ruffle. Binds to the plus end of microtubules and regulates the dynamics of the microtubule cytoskeleton. Promotes microtubule growth and microtubule bundling. Links cytoplasmic vesicles to microtubules and thereby plays an important role in intracellular vesicle trafficking. Plays a role macropinocytosis and endosome trafficking. This chain is CAP-Gly domain-containing linker protein 1 (Clip1), found in Mus musculus (Mouse).